The chain runs to 227 residues: ATP-dependent dethiobiotin synthetase BioD (227 aa).

13 to 18 (DIGKTY) contacts ATP. Thr-17 lines the Mg(2+) pocket. Lys-38 is an active-site residue. Substrate is bound at residue Ser-42. ATP-binding positions include Asp-55, 116–119 (EGSG), and 179–180 (NN). The Mg(2+) site is built by Asp-55 and Glu-116.

The protein belongs to the dethiobiotin synthetase family. Homodimer. Mg(2+) is required as a cofactor.

Its subcellular location is the cytoplasm. The catalysed reaction is (7R,8S)-7,8-diammoniononanoate + CO2 + ATP = (4R,5S)-dethiobiotin + ADP + phosphate + 3 H(+). It functions in the pathway cofactor biosynthesis; biotin biosynthesis; biotin from 7,8-diaminononanoate: step 1/2. In terms of biological role, catalyzes a mechanistically unusual reaction, the ATP-dependent insertion of CO2 between the N7 and N8 nitrogen atoms of 7,8-diaminopelargonic acid (DAPA, also called 7,8-diammoniononanoate) to form a ureido ring. This chain is ATP-dependent dethiobiotin synthetase BioD, found in Clostridium botulinum (strain Okra / Type B1).